The chain runs to 78 residues: Large ribosomal subunit protein eL20 (78 aa).

This sequence belongs to the eukaryotic ribosomal protein eL20 family. In terms of assembly, part of the 50S ribosomal subunit. Binds 23S rRNA.

The sequence is that of Large ribosomal subunit protein eL20 from Nanoarchaeum equitans (strain Kin4-M).